The following is a 346-amino-acid chain: Phosphoribosylformylglycinamidine cyclo-ligase (346 aa).

The protein belongs to the AIR synthase family.

Its subcellular location is the cytoplasm. The enzyme catalyses 2-formamido-N(1)-(5-O-phospho-beta-D-ribosyl)acetamidine + ATP = 5-amino-1-(5-phospho-beta-D-ribosyl)imidazole + ADP + phosphate + H(+). The protein operates within purine metabolism; IMP biosynthesis via de novo pathway; 5-amino-1-(5-phospho-D-ribosyl)imidazole from N(2)-formyl-N(1)-(5-phospho-D-ribosyl)glycinamide: step 2/2. The sequence is that of Phosphoribosylformylglycinamidine cyclo-ligase from Geobacillus kaustophilus (strain HTA426).